A 142-amino-acid chain; its full sequence is Putative thiosulfate sulfurtransferase, mitochondrial (142 aa).

Residues Met1 to Asn25 constitute a mitochondrion transit peptide. A Rhodanese domain is found at Gly43–Lys140. Cys104 serves as the catalytic Cysteine persulfide intermediate.

It localises to the mitochondrion. The catalysed reaction is thiosulfate + hydrogen cyanide = thiocyanate + sulfite + 2 H(+). Functionally, thiosulfate sulfurtransferase which catalyzes the transfer of sulfane sulfur from thiosulfate to cyanide. The polypeptide is Putative thiosulfate sulfurtransferase, mitochondrial (Schizosaccharomyces pombe (strain 972 / ATCC 24843) (Fission yeast)).